Consider the following 153-residue polypeptide: Large ribosomal subunit protein uL13 (153 aa).

The protein belongs to the universal ribosomal protein uL13 family. Part of the 50S ribosomal subunit.

Functionally, this protein is one of the early assembly proteins of the 50S ribosomal subunit, although it is not seen to bind rRNA by itself. It is important during the early stages of 50S assembly. The protein is Large ribosomal subunit protein uL13 of Methylobacterium sp. (strain 4-46).